The sequence spans 875 residues: MFFGDGGQLLSDKSLTGSAGGGNNRMKFNILPLAFFIGIIVSPARAELYFNRRFLSDDPDAVADLSAFTQGQELPPGVYRVDIYLNDTYISTRDVQFQMSQDGKQLAPCLSPEHMSAMGVNRYAVPGMERLPADTCTSLNSMIQGATFRFDVGQQRLYLTVPQLYMSNQARGYIAPEYWDNGITAALLNYDFSGNRVRDTYGGTSDYAYLNLKTGLNIGSWRLRDNTSWSYSAGKGYSQNNWQHINTWLERDIVSLRSRLTMGDSYTRGDIFDGVNFRGIQLASDDNMVPDSQRGYAPTIHGISRGTSRISIRQNGYEIYQSTLPPGPFEINDIYPAGSGGDLQVTLQEADGSVQRFNVPWSSVPVLQREGHLKYALSAGEFRSGGHQQDNPRFAEGTLKYGLPDGWTVYGGAWIAERYRAFNLGVGKNMGWLGAVSLDATRANARLPDESRHDGQSYRFLYNKSLTETGTNIQLIGYRYSTRGYFTFADTAWKKMSGYSVLTQDGVIQIQPKYTDYYNLAYNKREGAGEYQPADGESSTLYLSGSHQSYWGTDRTDRQLNAGFNSSVNDISWSLNYSLSRNAWQHETDRILSFDVSIPFSHWMRSDSTSAWRNASARYSQTLEAHGQAASTAGLYGTLLGDNNLGYSIQSGYTRGGYEGSSKTGYASLNYRGGYGNASAGYSHSGGYRQLYYGLSGGILAHANGLTLSQPLGDTLILVRAPGASDTRIENQTGVSTDWRGYAVLPYATDYRENRVALDTNTLADNVDIENTVVSVVPTHGAVVRADYKTRVGVKVLMTLMRNGKAVPFGSVVTARNGGSSIAGENGQVYLSGMPLSGQVSVKWGSQTTDQCTADYKLPKESAGQILSHVTASCR.

The signal sequence occupies residues 1 to 38 (MFFGDGGQLLSDKSLTGSAGGGNNRMKFNILPLAFFIG). Residues C852 and C874 are joined by a disulfide bond.

This sequence belongs to the fimbrial export usher family.

Its subcellular location is the cell outer membrane. Functionally, involved in the export and assembly of the F1C fimbriae subunits across the outer membrane. The sequence is that of Outer membrane usher protein FocD (focD) from Escherichia coli.